The sequence spans 320 residues: Cytochrome c1-1, heme protein, mitochondrial (320 aa).

The transit peptide at 1–77 (MSLGKKIRIG…LLSFATIAYS (77 aa)) directs the protein to the mitochondrion. Residues 78–280 (DEAEHGLECP…WAAEPEMEER (203 aa)) are Mitochondrial intermembrane-facing. The 108-residue stretch at 103–210 (ASIRRGHQVY…NGQNYVFALL (108 aa)) folds into the Cytochrome c domain. C116, C119, H120, and M239 together coordinate heme c. Residues 281-301 (KLMGFKWIFVLSLALLQAAYY) traverse the membrane as a helical segment. The Mitochondrial matrix portion of the chain corresponds to 302–320 (RRLRWSVLKSRKLVLDVVN).

Belongs to the cytochrome c family. Component of the ubiquinol-cytochrome c oxidoreductase (cytochrome b-c1 complex, complex III, CIII), a multisubunit enzyme composed of 3 respiratory subunits cytochrome b, cytochrome c1 and Rieske protein, 2 core protein subunits, and additional low-molecular weight protein subunits. The complex exists as an obligatory dimer and forms supercomplexes (SCs) in the inner mitochondrial membrane with cytochrome c oxidase (complex IV, CIV). The cofactor is heme c. As to expression, in all tissues analyzed.

It localises to the mitochondrion inner membrane. The enzyme catalyses a quinol + 2 Fe(III)-[cytochrome c](out) = a quinone + 2 Fe(II)-[cytochrome c](out) + 2 H(+)(out). Its function is as follows. Component of the ubiquinol-cytochrome c oxidoreductase, a multisubunit transmembrane complex that is part of the mitochondrial electron transport chain which drives oxidative phosphorylation. The respiratory chain contains 3 multisubunit complexes succinate dehydrogenase (complex II, CII), ubiquinol-cytochrome c oxidoreductase (cytochrome b-c1 complex, complex III, CIII) and cytochrome c oxidase (complex IV, CIV), that cooperate to transfer electrons derived from NADH and succinate to molecular oxygen, creating an electrochemical gradient over the inner membrane that drives transmembrane transport and the ATP synthase. The cytochrome b-c1 complex catalyzes electron transfer from ubiquinol to cytochrome c, linking this redox reaction to translocation of protons across the mitochondrial inner membrane, with protons being carried across the membrane as hydrogens on the quinol. In the process called Q cycle, 2 protons are consumed from the matrix, 4 protons are released into the intermembrane space and 2 electrons are passed to cytochrome c. Cytochrome c1 is a catalytic core subunit containing a c-type heme. It transfers electrons from the [2Fe-2S] iron-sulfur cluster of the Rieske protein to cytochrome c. The sequence is that of Cytochrome c1-1, heme protein, mitochondrial (CYCL) from Solanum tuberosum (Potato).